We begin with the raw amino-acid sequence, 335 residues long: Probable cytosolic iron-sulfur protein assembly protein Ciao1 (335 aa).

WD repeat units lie at residues 12 to 51 (GHKG…WSTK), 57 to 96 (GHKR…FECN), 101 to 140 (GHEN…EFEC), 146 to 185 (PHTQ…SDWD), 192 to 231 (SHTS…NDAG), 250 to 289 (QHSR…KRDE), and 301 to 335 (AHEQ…KMLD).

The protein belongs to the WD repeat CIA1 family.

Its function is as follows. Essential component of the cytosolic iron-sulfur (Fe/S) protein assembly machinery. Required for the maturation of extramitochondrial Fe/S proteins. The protein is Probable cytosolic iron-sulfur protein assembly protein Ciao1 of Drosophila willistoni (Fruit fly).